A 160-amino-acid chain; its full sequence is Small ribosomal subunit protein bS6 (160 aa).

The disordered stretch occupies residues 96-160 (RKVKRFIPRA…PRTRKVSKEQ (65 aa)). Low complexity predominate over residues 126-145 (TTDASKTEASTEATASKQSE). Over residues 151–160 (PRTRKVSKEQ) the composition is skewed to basic residues.

This sequence belongs to the bacterial ribosomal protein bS6 family.

In terms of biological role, binds together with bS18 to 16S ribosomal RNA. The sequence is that of Small ribosomal subunit protein bS6 from Metamycoplasma arthritidis (strain 158L3-1) (Mycoplasma arthritidis).